The chain runs to 682 residues: Activating transcription factor 7-interacting protein 2 (682 aa).

A disordered region spans residues 120–148 (SRTTESPSRVFTEEAKDSLNTSENDSEHQ). Over residues 137–148 (SLNTSENDSEHQ) the composition is skewed to polar residues. The stretch at 328 to 378 (EIYSINYELFDKKLKELNQRIGKTECRNKHEGIADKLLAKIAKLQRRIKTV) forms a coiled coil. Phosphoserine is present on Ser416. Composition is skewed to polar residues over residues 418–451 (IEKS…VSES) and 462–490 (ESPN…NSPN). Disordered regions lie at residues 418–491 (IEKS…SPNA) and 513–538 (NCNT…ETTP). Phosphoserine is present on residues Ser488 and Ser521. Polar residues predominate over residues 528–538 (KAASNSKETTP). The region spanning 575–680 (PPQKPELKVK…IKSIPGFSEN (106 aa)) is the Fibronectin type-III domain.

Belongs to the MCAF family. In terms of assembly, interacts with MBD1, SETDB1 and SP1. Probably forms a complex with SETDB1 and MBD1.

It is found in the nucleus. Functionally, recruiter that couples transcriptional factors to general transcription apparatus and thereby modulates transcription regulation and chromatin formation. Can both act as an activator or a repressor depending on the context. Mediates MBD1-dependent transcriptional repression, probably by recruiting complexes containing SETDB1. The complex formed with MBD1 and SETDB1 represses transcription and probably couples DNA methylation and histone H3 'Lys-9' trimethylation (H3K9me3) activity. In Homo sapiens (Human), this protein is Activating transcription factor 7-interacting protein 2 (ATF7IP2).